The chain runs to 220 residues: Iron-sulfur cluster repair protein YtfE (220 aa).

This sequence belongs to the RIC family. YtfE subfamily. As to quaternary structure, homodimer.

It localises to the cytoplasm. Di-iron-containing protein involved in the repair of iron-sulfur clusters damaged by oxidative and nitrosative stress conditions. The protein is Iron-sulfur cluster repair protein YtfE of Escherichia coli O8 (strain IAI1).